A 267-amino-acid chain; its full sequence is Glutamate racemase (267 aa).

Substrate contacts are provided by residues 9-10 (DS) and 41-42 (YG). Catalysis depends on cysteine 72, which acts as the Proton donor/acceptor. Substrate is bound at residue 73–74 (NT). The active-site Proton donor/acceptor is cysteine 184. A substrate-binding site is contributed by 185-186 (TH).

This sequence belongs to the aspartate/glutamate racemases family.

The catalysed reaction is L-glutamate = D-glutamate. It participates in cell wall biogenesis; peptidoglycan biosynthesis. In terms of biological role, provides the (R)-glutamate required for cell wall biosynthesis. The sequence is that of Glutamate racemase from Staphylococcus epidermidis (strain ATCC 12228 / FDA PCI 1200).